The following is a 37-amino-acid chain: Large ribosomal subunit protein bL36 (37 aa).

It belongs to the bacterial ribosomal protein bL36 family.

The polypeptide is Large ribosomal subunit protein bL36 (Brevibacillus brevis (strain 47 / JCM 6285 / NBRC 100599)).